The primary structure comprises 139 residues: Thioredoxin 2 (139 aa).

A zinc finger lies at 5 to 18 (CTHCQAINRIPDDR). The 114-residue stretch at 26–139 (GRCGHDLFDG…PFDSWLNESL (114 aa)) folds into the Thioredoxin domain. The cysteines at positions 64 and 67 are disulfide-linked.

This sequence belongs to the thioredoxin family.

It localises to the cytoplasm. It catalyses the reaction [protein]-dithiol + NAD(+) = [protein]-disulfide + NADH + H(+). The enzyme catalyses [protein]-dithiol + NADP(+) = [protein]-disulfide + NADPH + H(+). Its function is as follows. Efficient electron donor for the essential enzyme ribonucleotide reductase. Is also able to reduce the interchain disulfide bridges of insulin. The protein is Thioredoxin 2 (trxC) of Escherichia coli O6:H1 (strain CFT073 / ATCC 700928 / UPEC).